Here is a 265-residue protein sequence, read N- to C-terminus: Hydroxyethylthiazole kinase (265 aa).

Position 55 (M55) interacts with substrate. ATP is bound by residues R130 and S176. G203 serves as a coordination point for substrate.

The protein belongs to the Thz kinase family. Mg(2+) serves as cofactor.

The catalysed reaction is 5-(2-hydroxyethyl)-4-methylthiazole + ATP = 4-methyl-5-(2-phosphooxyethyl)-thiazole + ADP + H(+). It functions in the pathway cofactor biosynthesis; thiamine diphosphate biosynthesis; 4-methyl-5-(2-phosphoethyl)-thiazole from 5-(2-hydroxyethyl)-4-methylthiazole: step 1/1. Its function is as follows. Catalyzes the phosphorylation of the hydroxyl group of 4-methyl-5-beta-hydroxyethylthiazole (THZ). The polypeptide is Hydroxyethylthiazole kinase (Leptospira interrogans serogroup Icterohaemorrhagiae serovar copenhageni (strain Fiocruz L1-130)).